Here is a 210-residue protein sequence, read N- to C-terminus: Na(+)-translocating NADH-quinone reductase subunit D (210 aa).

6 helical membrane-spanning segments follow: residues 9–29, 42–62, 72–92, 96–116, 131–151, and 178–198; these read AVLF…LGIC, LIMS…ISTI, IIVQ…VLQA, ATAK…IVMG, FLDG…VGFI, and MGLL…IWVL.

This sequence belongs to the NqrDE/RnfAE family. As to quaternary structure, composed of six subunits; NqrA, NqrB, NqrC, NqrD, NqrE and NqrF.

It is found in the cell inner membrane. It carries out the reaction a ubiquinone + n Na(+)(in) + NADH + H(+) = a ubiquinol + n Na(+)(out) + NAD(+). Its function is as follows. NQR complex catalyzes the reduction of ubiquinone-1 to ubiquinol by two successive reactions, coupled with the transport of Na(+) ions from the cytoplasm to the periplasm. NqrA to NqrE are probably involved in the second step, the conversion of ubisemiquinone to ubiquinol. The chain is Na(+)-translocating NADH-quinone reductase subunit D from Pseudoalteromonas translucida (strain TAC 125).